Consider the following 261-residue polypeptide: MAVQGIWSGTISFSLVAIPVQLVKAVAIGRVSFRLLHDKDYSPLARRMFCPEQEKMVPPDEIIRGYEIGPDRYLPITDEELESVSPERSRTIEIVEFIDMNEVDPIYYDHPYYLVPLKGGEKAYRLLVEVMRRTNKAGLAKFVLAEREYLVAVKSTEGALTLITLHYSDEVLSDEDIAPKEGKIAAEVKSGIKKSIKNMMADFNPGKYADERRDKVMDLLKKKVKEKAPVAAPEVEKAEGEGPADLIAALEEIMREVKKNR.

Residues 12–171 (SFSLVAIPVQ…LITLHYSDEV (160 aa)) enclose the Ku domain.

Belongs to the prokaryotic Ku family. In terms of assembly, homodimer. Interacts with LigD.

With LigD forms a non-homologous end joining (NHEJ) DNA repair enzyme, which repairs dsDNA breaks with reduced fidelity. Binds linear dsDNA with 5'- and 3'- overhangs but not closed circular dsDNA nor ssDNA. Recruits and stimulates the ligase activity of LigD. This is Non-homologous end joining protein Ku 1 from Geotalea uraniireducens (strain Rf4) (Geobacter uraniireducens).